The sequence spans 839 residues: NT-3 growth factor receptor (839 aa).

An N-terminal signal peptide occupies residues 1–31; it reads MDVSLCPAKCSFWRIFLLGSVWLDYVGSVLA. 2 cysteine pairs are disulfide-bonded: Cys-32–Cys-38 and Cys-36–Cys-45. Over 32–429 the chain is Extracellular; the sequence is CPANCVCSKT…TVTHKPEEDT (398 aa). 2 N-linked (GlcNAc...) asparagine glycosylation sites follow: Asn-72 and Asn-79. LRR repeat units follow at residues 104 to 125 and 128 to 149; these read GLQK…AFAK and HLRY…LFQT. Residues Asn-133 and Asn-163 are each glycosylated (N-linked (GlcNAc...) asparagine). The region spanning 160-209 is the LRRCT domain; it reads NFFNCSCDIRWMQLWQEQGEAKLNSQNLYCINADGSQLPLFRMNISQCDL. Intrachain disulfides connect Cys-164–Cys-189 and Cys-166–Cys-207. 7 N-linked (GlcNAc...) asparagine glycosylation sites follow: Asn-203, Asn-218, Asn-232, Asn-259, Asn-267, Asn-272, and Asn-294. Ig-like C2-type domains are found at residues 210–300 and 309–382; these read PEIS…VALT and SLEE…IAKN. Cys-231 and Cys-284 are disulfide-bonded. A disulfide bond links Cys-320 and Cys-362. Residues Asn-375 and Asn-388 are each glycosylated (N-linked (GlcNAc...) asparagine). A helical transmembrane segment spans residues 430–453; it reads FGVSIAVGLAAFACVLLVVLFVMI. Topologically, residues 454-839 are cytoplasmic; the sequence is NKYGRRSKFG…ATPIYLDILG (386 aa). A Phosphoserine modification is found at Ser-493. A Phosphotyrosine; by autocatalysis modification is found at Tyr-516. A Protein kinase domain is found at 538 to 839; sequence IVLKRELGEG…ATPIYLDILG (302 aa). Residues 544–552 and Lys-572 contribute to the ATP site; that span reads LGEGAFGKV. The active-site Proton acceptor is Asp-679. Tyr-705, Tyr-709, and Tyr-710 each carry phosphotyrosine; by autocatalysis.

The protein belongs to the protein kinase superfamily. Tyr protein kinase family. Insulin receptor subfamily. As to quaternary structure, exists in a dynamic equilibrium between monomeric (low affinity) and dimeric (high affinity) structures. Binds SH2B2. Interacts with SQSTM1 and KIDINS220. Interacts with PTPRS. Interacts with MAPK8IP3/JIP3. Post-translationally, ligand-mediated auto-phosphorylation. In terms of tissue distribution, widely expressed but mainly in nervous tissue. Isoform 2 is expressed at higher levels in adult brain than in fetal brain.

Its subcellular location is the membrane. The catalysed reaction is L-tyrosyl-[protein] + ATP = O-phospho-L-tyrosyl-[protein] + ADP + H(+). Receptor tyrosine kinase involved in nervous system and probably heart development. Upon binding of its ligand NTF3/neurotrophin-3, NTRK3 autophosphorylates and activates different signaling pathways, including the phosphatidylinositol 3-kinase/AKT and the MAPK pathways, that control cell survival and differentiation. This Homo sapiens (Human) protein is NT-3 growth factor receptor (NTRK3).